Consider the following 315-residue polypeptide: MKPSLQVEFCGHIYENPLMNASGVCCMTTNELDDMARSSSGAFITKSATSMERDGNPEPRYVSVPLGSINSMGLPNKGIDYYLDYVLDRQDRFPSENPPFMSVAGMSIDENIKLLHRIQDSNFRGITELNLSCPNVPGKPQVAYDFELTDQILSSVFEFFTKPLGVKLPPYFDFAHFDAMACILNKYPIAYVNCINSVGNGLYIDVEKESVVIKPKDGFGGIGGEYIKPTALANVRAFYNRLNGRIRIIGTGGIKTGQDAFEHLLCGATMLQIGTELQNEGTEIFERINAELLQILEQKGYQSIEDFRGKLRSIS.

Residues Lys-46, 70–74, and Asn-130 each bind substrate; that span reads NSMGL. 46–47 is a binding site for FMN; sequence KS. Asn-130 is an FMN binding site. Cys-133 (nucleophile) is an active-site residue. Residues Lys-167 and Ile-195 each contribute to the FMN site. Substrate is bound at residue 196–197; the sequence is NS. FMN contacts are provided by residues Gly-224, 252–253, and 274–275; these read GG and GT.

Belongs to the dihydroorotate dehydrogenase family. Type 1 subfamily. Homodimer. The cofactor is FMN.

Its subcellular location is the cytoplasm. The enzyme catalyses (S)-dihydroorotate + fumarate = orotate + succinate. It functions in the pathway pyrimidine metabolism; UMP biosynthesis via de novo pathway. In terms of biological role, catalyzes the conversion of dihydroorotate to orotate with fumarate as the electron acceptor. This Kluyveromyces lactis (strain ATCC 8585 / CBS 2359 / DSM 70799 / NBRC 1267 / NRRL Y-1140 / WM37) (Yeast) protein is Dihydroorotate dehydrogenase (fumarate) (URA1).